Here is a 197-residue protein sequence, read N- to C-terminus: MSIVIIAVLALSALALTFGAVLGFASIKFKVEGNPIVDQIDGLLPQTQCGQCGYPGCRPYAEAIANGDAINKCPPGGEATITALADLLDVEAVPLDSEHGESKGKQVAYIREDECIGCTKCIQACPVDAILGAAKQMHTVIVSECTGCDLCVEPCPVDCIDMIPAPSGIRDWAWDMPKPPVSSGAIIATDQNNGMAA.

The tract at residues 1–26 is hydrophobic; sequence MSIVIIAVLALSALALTFGAVLGFAS. Residues 32-90 form the 4Fe-4S domain; the sequence is EGNPIVDQIDGLLPQTQCGQCGYPGCRPYAEAIANGDAINKCPPGGEATITALADLLDV. 12 residues coordinate [4Fe-4S] cluster: Cys49, Cys52, Cys57, Cys73, Cys115, Cys118, Cys121, Cys125, Cys145, Cys148, Cys151, and Cys155. 2 consecutive 4Fe-4S ferredoxin-type domains span residues 106 to 135 and 136 to 165; these read QVAYIREDECIGCTKCIQACPVDAILGAAK and QMHTVIVSECTGCDLCVEPCPVDCIDMIPA.

The protein belongs to the 4Fe4S bacterial-type ferredoxin family. RnfB subfamily. In terms of assembly, the complex is composed of six subunits: RnfA, RnfB, RnfC, RnfD, RnfE and RnfG. [4Fe-4S] cluster serves as cofactor.

It is found in the cell inner membrane. Its function is as follows. Part of a membrane-bound complex that couples electron transfer with translocation of ions across the membrane. In Hahella chejuensis (strain KCTC 2396), this protein is Ion-translocating oxidoreductase complex subunit B.